Here is a 290-residue protein sequence, read N- to C-terminus: METPLDVLSRAASLVHADDEKREAALRGEPRIQTLPVASALSSHRTGPPPISPSKRKFSMEPGDEDLDCDNDHVSKMSRIFNPHLNKTANGDCRRDPRERSRSPIERAVAPTMSLHGSHLYTSLPSLGLEQPLALTKNSLDASRPAGLSPTLTPGERQQNRPSVITCASAGARNCNLSHCPIAHSGCAAPGPASYRRPPSAATTCDPVVEEHFRRSLGKNYKEPEPAPNSVSITGSVDDHFAKALGDTWLQIKAAKDGASSSPESASRRGQPASPSAHMVSHSHSPSVVS.

An N-acetylmethionine modification is found at methionine 1. Positions 17-30 are enriched in basic and acidic residues; the sequence is ADDEKREAALRGEP. Disordered stretches follow at residues 17-65, 85-106, 140-161, and 254-290; these read ADDE…PGDE, LNKT…SPIE, LDAS…QQNR, and AAKD…SVVS. Serine 52 is modified (phosphoserine). Residues 92 to 105 are compositionally biased toward basic and acidic residues; that stretch reads DCRRDPRERSRSPI. The residue at position 149 (serine 149) is a Phosphoserine. A compositionally biased stretch (polar residues) spans 150–161; sequence PTLTPGERQQNR. Threonine 153 carries the post-translational modification Phosphothreonine. Positions 272 to 290 are enriched in low complexity; that stretch reads PASPSAHMVSHSHSPSVVS. Serine 274 bears the Phosphoserine mark.

This sequence belongs to the vestigial family. As to quaternary structure, interacts with TEFs. Interacts with IRF2BP2.

It localises to the nucleus. May act as a specific coactivator for the mammalian TEFs. This chain is Transcription cofactor vestigial-like protein 4, found in Homo sapiens (Human).